The primary structure comprises 132 residues: MEALAELIKRKVPNEGLIIEVGVGFYLKVAKKLKEYGFNVVVVDINQEAVKNAIKERIPGFVDDVFNPNLKIYLKARAIYSIRPNPEIMMALLTLAKKVKVPLYIVPLSGDVPPREMKLINYKGISVYVWEP.

Belongs to the UPF0146 family.

This Pyrococcus furiosus (strain ATCC 43587 / DSM 3638 / JCM 8422 / Vc1) protein is UPF0146 protein PF0123.